Reading from the N-terminus, the 382-residue chain is ATP phosphoribosyltransferase regulatory subunit (382 aa).

It belongs to the class-II aminoacyl-tRNA synthetase family. HisZ subfamily. As to quaternary structure, heteromultimer composed of HisG and HisZ subunits.

It localises to the cytoplasm. Its pathway is amino-acid biosynthesis; L-histidine biosynthesis; L-histidine from 5-phospho-alpha-D-ribose 1-diphosphate: step 1/9. Its function is as follows. Required for the first step of histidine biosynthesis. May allow the feedback regulation of ATP phosphoribosyltransferase activity by histidine. The polypeptide is ATP phosphoribosyltransferase regulatory subunit (Burkholderia thailandensis (strain ATCC 700388 / DSM 13276 / CCUG 48851 / CIP 106301 / E264)).